We begin with the raw amino-acid sequence, 150 residues long: MADNEILQMHDLKPAPGAKKDRTRVGRGEGSKGKTSGRGAKGQTKRNHVRPGFEGGQLPLYMRLPKLRGFKNPFKVEFQVINIARLVELFPEGGEVAVADLIAKGAVRDNAPVKVLGDGETTVAFTLKGVKASASAKSKIEAAGGSVSED.

A disordered region spans residues 1-55 (MADNEILQMHDLKPAPGAKKDRTRVGRGEGSKGKTSGRGAKGQTKRNHVRPGFEG). The span at 8-32 (QMHDLKPAPGAKKDRTRVGRGEGSK) shows a compositional bias: basic and acidic residues.

It belongs to the universal ribosomal protein uL15 family. In terms of assembly, part of the 50S ribosomal subunit.

Its function is as follows. Binds to the 23S rRNA. This chain is Large ribosomal subunit protein uL15, found in Bifidobacterium longum (strain NCC 2705).